Here is a 469-residue protein sequence, read N- to C-terminus: Zinc transporter SLC39A7 (469 aa).

Residues 5–25 (LGAPHWVAVGLLTWAALGLLV) traverse the membrane as a helical segment. Composition is skewed to basic and acidic residues over residues 43-56 (HGHSHRRSHEDFHH) and 66-114 (HTHE…EHSH). The segment at 43 to 122 (HGHSHRRSHE…SHGGYGESGA (80 aa)) is disordered. A Pros-methylhistidine modification is found at His-66. 3 helical membrane passes run 138–158 (ALGATVLISAAPFFVLFLIPV), 169–189 (LQILLSFASGGLLGDAFLHLI), and 214–234 (GPILSVGLWVLSGIVAFLVVE). The span at 242–255 (GGHGHSHGHGHTHG) shows a compositional bias: basic residues. The disordered stretch occupies residues 242–313 (GGHGHSHGHG…QNSEEEKTGS (72 aa)). Positions 256 to 266 (HTQGSHGHGTQ) are enriched in low complexity. Phosphoserine is present on residues Ser-275 and Ser-276. Positions 295 to 313 (RLKDGPLRPQNSEEEKTGS) are enriched in basic and acidic residues. 3 consecutive transmembrane segments (helical) span residues 386–406 (LTAIGALAGTACALLTEGGAV), 417–437 (GWVLPFTAGGFIYVATVSVLP), and 448–468 (SLLEVLGLLGGVVMMVLIAHL).

Belongs to the ZIP transporter (TC 2.A.5) family. KE4/Catsup subfamily. Homodimer. Post-translationally, methylation at some His residue by METTL9 leads to reduced zinc-binding. In terms of processing, rapidly phosphorylated by CK2 following Zn(2+) treatment. This phosphorylation is required for efficient cytosolic Zn(2+) release.

The protein resides in the endoplasmic reticulum membrane. Its subcellular location is the golgi apparatus. It localises to the cis-Golgi network membrane. The catalysed reaction is Zn(2+)(in) = Zn(2+)(out). Transports Zn(2+) from the endoplasmic reticulum (ER)/Golgi apparatus to the cytosol, playing an essential role in the regulation of cytosolic zinc levels. Acts as a gatekeeper of zinc release from intracellular stores, requiring post-translational activation by phosphorylation, resulting in activation of multiple downstream pathways leading to cell growth and proliferation. Has an essential role in B cell development and is required for proper B cell receptor signaling. Plays an important role in maintaining intestinal epithelial homeostasis and skin dermis development by regulating ER function. Controls cell signaling pathways involved in glucose metabolism in skeletal muscle. Has a protective role against ER stress in different biological contexts. Mediates Zn(2+)-induced ferroptosis. This Canis lupus familiaris (Dog) protein is Zinc transporter SLC39A7.